The primary structure comprises 587 residues: Glutathione hydrolase proenzyme (587 aa).

An N-terminal signal peptide occupies residues 1–28 (MKRTWNVCLTALLSVLLVAGSVPFHAEA). Residues 29–35 (KKPPKSY) constitute a propeptide that is removed on maturation. Arginine 113 provides a ligand contact to L-glutamate. The active-site Nucleophile is threonine 403. Residues threonine 421, glutamate 423, glutamate 442, aspartate 445, 464 to 465 (SS), and 485 to 486 (GG) each bind L-glutamate.

It belongs to the gamma-glutamyltransferase family. This enzyme consists of two polypeptide chains, which are synthesized in precursor form from a single polypeptide. Post-translationally, cleaved by autocatalysis into a large and small subunit.

Its subcellular location is the secreted. The enzyme catalyses an N-terminal (5-L-glutamyl)-[peptide] + an alpha-amino acid = 5-L-glutamyl amino acid + an N-terminal L-alpha-aminoacyl-[peptide]. It catalyses the reaction glutathione + H2O = L-cysteinylglycine + L-glutamate. The catalysed reaction is an S-substituted glutathione + H2O = an S-substituted L-cysteinylglycine + L-glutamate. It participates in sulfur metabolism; glutathione metabolism. Inhibited by glucose. In terms of biological role, cleaves the gamma-glutamyl bond of extracellular glutathione (gamma-Glu-Cys-Gly), glutathione conjugates, and other gamma-glutamyl compounds. The metabolism of glutathione releases free glutamate and the dipeptide cysteinyl-glycine, which is hydrolyzed to cysteine and glycine by dipeptidases. Uses glutamine as a gamma-glutamyl donor and acceptor for gamma-polyglutamic acid synthesis. Dipeptides are better gamma-glutamyl acceptors than free amino acids. This chain is Glutathione hydrolase proenzyme (ggt), found in Bacillus subtilis subsp. natto.